Consider the following 403-residue polypeptide: MTEIRRIQDADVAGKRVLVRVDFNVPMKDGQVTDATRLEAALPTIEYLTEAGAKVVLLAHFGRPKGAVVPEMSLEAVCQPLADLLGDAVYFSTVTSGEDAVAATMDLEAGEVLLIENTRFAAGEETNDPGFAAALAELGDLYVNDAFSAAHRAHASTEGITHHLPSYAGLALQREIDHLVAALESPKRPVIALVGGAKVSTKIDLLQNLVKKVDTLFVGGGMANTLLHAQGIKVGSSLCETDLVDTARAIFAAAEESGCKLMLPTDVVLAKEFKPNPETRLAAVTDVEDNEMILDCGPATVVALGQAIDRSATLIWNGPLGAFETPPFDAATVEAAKYAARAAVEGELIAVAGGGDTVSALNQAGVSGDFTFISTAGGAFLEWMEGKTLPGIAAVMGTPELVA.

Substrate contacts are provided by residues 22–24 (DFN), arginine 37, 60–63 (HFGR), arginine 119, and arginine 152. Residues lysine 202, glutamate 324, and 354–357 (GGDT) contribute to the ATP site.

It belongs to the phosphoglycerate kinase family. In terms of assembly, monomer.

The protein localises to the cytoplasm. The catalysed reaction is (2R)-3-phosphoglycerate + ATP = (2R)-3-phospho-glyceroyl phosphate + ADP. The protein operates within carbohydrate degradation; glycolysis; pyruvate from D-glyceraldehyde 3-phosphate: step 2/5. This Maricaulis maris (strain MCS10) (Caulobacter maris) protein is Phosphoglycerate kinase.